The sequence spans 231 residues: ATP phosphoribosyltransferase (231 aa).

Belongs to the ATP phosphoribosyltransferase family. Short subfamily. As to quaternary structure, heteromultimer composed of HisG and HisZ subunits.

It localises to the cytoplasm. It catalyses the reaction 1-(5-phospho-beta-D-ribosyl)-ATP + diphosphate = 5-phospho-alpha-D-ribose 1-diphosphate + ATP. It functions in the pathway amino-acid biosynthesis; L-histidine biosynthesis; L-histidine from 5-phospho-alpha-D-ribose 1-diphosphate: step 1/9. Functionally, catalyzes the condensation of ATP and 5-phosphoribose 1-diphosphate to form N'-(5'-phosphoribosyl)-ATP (PR-ATP). Has a crucial role in the pathway because the rate of histidine biosynthesis seems to be controlled primarily by regulation of HisG enzymatic activity. The sequence is that of ATP phosphoribosyltransferase from Sinorhizobium medicae (strain WSM419) (Ensifer medicae).